Reading from the N-terminus, the 192-residue chain is Phosphoheptose isomerase (192 aa).

In terms of domain architecture, SIS spans 34 to 192; the sequence is LADALGNGKK…LEKRLFGERR (159 aa). 49-51 contributes to the substrate binding site; that stretch reads NGG. Zn(2+) is bound by residues H58 and E62. Residues E62, 91–92, 117–119, S122, and Q169 each bind substrate; these read ND and STS. Zn(2+) is bound by residues Q169 and H177.

It belongs to the SIS family. GmhA subfamily. In terms of assembly, homotetramer. It depends on Zn(2+) as a cofactor.

The protein resides in the cytoplasm. It catalyses the reaction 2 D-sedoheptulose 7-phosphate = D-glycero-alpha-D-manno-heptose 7-phosphate + D-glycero-beta-D-manno-heptose 7-phosphate. It functions in the pathway carbohydrate biosynthesis; D-glycero-D-manno-heptose 7-phosphate biosynthesis; D-glycero-alpha-D-manno-heptose 7-phosphate and D-glycero-beta-D-manno-heptose 7-phosphate from sedoheptulose 7-phosphate: step 1/1. Its function is as follows. Catalyzes the isomerization of sedoheptulose 7-phosphate in D-glycero-D-manno-heptose 7-phosphate. The protein is Phosphoheptose isomerase of Geotalea daltonii (strain DSM 22248 / JCM 15807 / FRC-32) (Geobacter daltonii).